We begin with the raw amino-acid sequence, 236 residues long: MESRKGIKEVSMNFLDQLDAIIQNKHMLEHPFYMKWSKGELTKEQLQAYAKDYYLHIKAFPKYLSAIHSRCDDLEARKLLLDNLMDEENGYPNHIDLWKQFVFALGVSSEELEAHEPSEAAKAKVATFMRWCTGDSLAAGVAALYSYESQIPCVAKEKIRGLIEYFGFSNPEDYAYFTEHEEADVRHAREEKALIEMLSRDDSDKVLEASREVTQSLYGFLDSFLEPATCCHCHKA.

Positions 87, 94, 148, 180, 184, and 187 each coordinate Fe(2+).

Belongs to the CADD family. In terms of assembly, homodimer. The cofactor is Fe(2+). Mn(2+) is required as a cofactor.

Its function is as follows. Involved in de novo para-aminobenzoate (PABA) biosynthesis. Acts as a self-sacrificing or 'suicide' enzyme that utilizes its own active site tyrosine residue(s) as the substrate for PABA synthesis. The side chain of the tyrosine residue is released from the protein backbone via cleavage of the C(alpha)-C(beta) bond, leaving a glycine in place of the original tyrosine residue. Reaction requires O(2) and a reduced dimetal cofactor. The polypeptide is 4-aminobenzoate synthase (Chlamydia muridarum (strain MoPn / Nigg)).